The sequence spans 226 residues: Protein TRI1 (226 aa).

The 56-residue stretch at 1 to 56 (MADINKYIPMVDAILSVSNPDEISPKRVRKALQILYSVNLDSQRKLINELILERFG) folds into the DEK-C domain. Residues 83-118 (QKEEERPLRSTRKRKGKSESKSKRKKKKNDSPDSNS) form a disordered region. Over residues 91-110 (RSTRKRKGKSESKSKRKKKK) the composition is skewed to basic residues. A Phosphoserine modification is found at serine 113. Residues 119-195 (ISVRKVLLSA…NKLLTKHLFN (77 aa)) form the SWIB/MDM2 domain. The segment covering 200-218 (VKHEEEQKQTPEKEIKLEN) has biased composition (basic and acidic residues). Positions 200–226 (VKHEEEQKQTPEKEIKLENESLPNLSG) are disordered. Residues lysine 201 and lysine 215 each participate in a glycyl lysine isopeptide (Lys-Gly) (interchain with G-Cter in SUMO) cross-link. Serine 225 carries the post-translational modification Phosphoserine.

Its subcellular location is the cytoplasm. The protein localises to the nucleus. The protein resides in the nucleolus. Functionally, may be involved in transcription regulation. The polypeptide is Protein TRI1 (TRI1) (Saccharomyces cerevisiae (strain ATCC 204508 / S288c) (Baker's yeast)).